Reading from the N-terminus, the 228-residue chain is Uracil-DNA glycosylase (228 aa).

D71 serves as the catalytic Proton acceptor.

It belongs to the uracil-DNA glycosylase (UDG) superfamily. UNG family.

The protein localises to the cytoplasm. The enzyme catalyses Hydrolyzes single-stranded DNA or mismatched double-stranded DNA and polynucleotides, releasing free uracil.. Its function is as follows. Excises uracil residues from the DNA which can arise as a result of misincorporation of dUMP residues by DNA polymerase or due to deamination of cytosine. The chain is Uracil-DNA glycosylase from Thermobifida fusca (strain YX).